The chain runs to 258 residues: Thiazole synthase (258 aa).

The Schiff-base intermediate with DXP role is filled by K97. Residues G158, 184 to 185, and 206 to 207 contribute to the 1-deoxy-D-xylulose 5-phosphate site; these read AG and NT.

Belongs to the ThiG family. As to quaternary structure, homotetramer. Forms heterodimers with either ThiH or ThiS.

It localises to the cytoplasm. It carries out the reaction [ThiS sulfur-carrier protein]-C-terminal-Gly-aminoethanethioate + 2-iminoacetate + 1-deoxy-D-xylulose 5-phosphate = [ThiS sulfur-carrier protein]-C-terminal Gly-Gly + 2-[(2R,5Z)-2-carboxy-4-methylthiazol-5(2H)-ylidene]ethyl phosphate + 2 H2O + H(+). It participates in cofactor biosynthesis; thiamine diphosphate biosynthesis. In terms of biological role, catalyzes the rearrangement of 1-deoxy-D-xylulose 5-phosphate (DXP) to produce the thiazole phosphate moiety of thiamine. Sulfur is provided by the thiocarboxylate moiety of the carrier protein ThiS. In vitro, sulfur can be provided by H(2)S. The chain is Thiazole synthase from Marinomonas sp. (strain MWYL1).